We begin with the raw amino-acid sequence, 500 residues long: Sodium/potassium/calcium exchanger 5 (500 aa).

An N-terminal signal peptide occupies residues 1-29 (MQTKGGQTWARRALLLGILWATAHLPLSG). Residues 30–66 (TSLPQRLPRATGNSTQCVISPSSEFPEGFFTRQERRD) lie on the Extracellular side of the membrane. Residues 67–87 (GGIIIYFLIIVYMFMAISIVC) traverse the membrane as a helical segment. At 88-111 (DEYFLPSLEIISESLGLSQDVAGT) the chain is on the cytoplasmic side. Residues 112 to 132 (TFMAAGSSAPELVTAFLGVFI) form a helical membrane-spanning segment. At 133 to 136 (TKGD) the chain is on the extracellular side. A helical membrane pass occupies residues 137-157 (IGISTILGSAIYNLLGICAAC). At 158 to 169 (GLLSNTVSTLSC) the chain is on the cytoplasmic side. Residues 170–190 (WPLFRDCAAYTISAAAVLGII) form a helical membrane-spanning segment. Topologically, residues 191–195 (YDNQV) are extracellular. Residues 196–216 (YWYEGALLLLIYGLYVLVLCF) form a helical membrane-spanning segment. Topologically, residues 217–302 (DIKINQYIIK…PSVFNMPEAD (86 aa)) are cytoplasmic. The chain crosses the membrane as a helical span at residues 303-323 (LKRIFWVLSLPIITLLFLTTP). The Extracellular segment spans residues 324–333 (DCRKKFWKNY). The chain crosses the membrane as a helical span at residues 334–354 (FVITFFMSAIWISAFTYILVW). The Cytoplasmic portion of the chain corresponds to 355 to 368 (MVTITGETLEIPDT). The helical transmembrane segment at 369-389 (VMGLTLLAAGTSIPDTIASVL) threads the bilayer. At 390 to 399 (VARKGKGDMA) the chain is on the extracellular side. Residues 400 to 420 (MSNIVGSNVFDMLCLGIPWFI) form a helical membrane-spanning segment. Over 421–437 (KTAFINGSAPAEVNSRG) the chain is Cytoplasmic. The chain crosses the membrane as a helical span at residues 438 to 458 (LTYITISLNISIIFLFLAVHF). The Extracellular portion of the chain corresponds to 459 to 468 (NGWKLDRKLG). The helical transmembrane segment at 469–489 (IVCLLSYLGLATLSVLYELGI) threads the bilayer. At 490–500 (IGNNKIRGCGG) the chain is on the cytoplasmic side.

Belongs to the Ca(2+):cation antiporter (CaCA) (TC 2.A.19) family. SLC24A subfamily.

Its subcellular location is the golgi apparatus. The protein localises to the trans-Golgi network membrane. It is found in the melanosome. The catalysed reaction is Ca(2+)(out) + K(+)(out) + 4 Na(+)(in) = Ca(2+)(in) + K(+)(in) + 4 Na(+)(out). Functionally, calcium, potassium:sodium antiporter that transports 1 Ca(2+) and 1 K(+) to the melanosome in exchange for 4 cytoplasmic Na(+). Involved in pigmentation, possibly by participating in ion transport in melanosomes. Predominant sodium-calcium exchanger in melanocytes. This chain is Sodium/potassium/calcium exchanger 5, found in Homo sapiens (Human).